The following is a 242-amino-acid chain: Glucosamine-6-phosphate deaminase (242 aa).

The Proton acceptor; for enolization step role is filled by Asp67. The active-site For ring-opening step is Asn136. Catalysis depends on His138, which acts as the Proton acceptor; for ring-opening step. The active-site For ring-opening step is Glu143.

It belongs to the glucosamine/galactosamine-6-phosphate isomerase family. NagB subfamily.

The enzyme catalyses alpha-D-glucosamine 6-phosphate + H2O = beta-D-fructose 6-phosphate + NH4(+). It functions in the pathway amino-sugar metabolism; N-acetylneuraminate degradation; D-fructose 6-phosphate from N-acetylneuraminate: step 5/5. Functionally, catalyzes the reversible isomerization-deamination of glucosamine 6-phosphate (GlcN6P) to form fructose 6-phosphate (Fru6P) and ammonium ion. In Clostridium perfringens (strain ATCC 13124 / DSM 756 / JCM 1290 / NCIMB 6125 / NCTC 8237 / Type A), this protein is Glucosamine-6-phosphate deaminase.